The primary structure comprises 130 residues: Small ribosomal subunit protein uS9 (130 aa).

This sequence belongs to the universal ribosomal protein uS9 family.

The chain is Small ribosomal subunit protein uS9 from Hamiltonella defensa subsp. Acyrthosiphon pisum (strain 5AT).